The sequence spans 68 residues: TxMMSK-03 (68 aa).

The N-terminal stretch at 1–19 (MSKLGALLIICLLLFPLTA) is a signal peptide. A propeptide spanning residues 20–50 (VPMDGDQPADRPAERMQDDISFEQHPMFDAT) is cleaved from the precursor. Disulfide bonds link C53-C67, C54-C63, and C59-C66. P65 bears the 4-hydroxyproline; partial mark.

Contains 3 disulfide bonds. Expressed by the venom duct. Both hydroxylated and non-hydroxylated forms are mostly and only present in part 2 (proximal of the venom bulb) of the venom duct, respectively.

Its subcellular location is the secreted. The sequence is that of TxMMSK-03 from Conus textile (Cloth-of-gold cone).